A 420-amino-acid chain; its full sequence is DNA repair protein NreA (420 aa).

The PIP motif motif lies at 413 to 420 (QTDIFDFA).

Belongs to the Nre family. In terms of assembly, interacts with the DNA polymerase sliding clamp (PCNA) via the PIP (PCNA-interacting peptide) motif.

Its function is as follows. Involved in DNA damage repair. Works together with the UvrABC proteins in repairing DNA damage resulting from exposure to the DNA damaging agent mitomycin C (MMC). The sequence is that of DNA repair protein NreA from Haloferax volcanii (strain ATCC 29605 / DSM 3757 / JCM 8879 / NBRC 14742 / NCIMB 2012 / VKM B-1768 / DS2) (Halobacterium volcanii).